We begin with the raw amino-acid sequence, 249 residues long: Type III pantothenate kinase (249 aa).

6–13 provides a ligand contact to ATP; it reads DCGNSFIK. Residues Tyr93 and 100–103 each bind substrate; that span reads GLDR. Residue Asp102 is the Proton acceptor of the active site. Asp122 is a K(+) binding site. Residue Thr125 coordinates ATP. Thr181 serves as a coordination point for substrate.

It belongs to the type III pantothenate kinase family. In terms of assembly, homodimer. It depends on NH4(+) as a cofactor. The cofactor is K(+).

The protein localises to the cytoplasm. The enzyme catalyses (R)-pantothenate + ATP = (R)-4'-phosphopantothenate + ADP + H(+). Its pathway is cofactor biosynthesis; coenzyme A biosynthesis; CoA from (R)-pantothenate: step 1/5. In terms of biological role, catalyzes the phosphorylation of pantothenate (Pan), the first step in CoA biosynthesis. This Pseudomonas savastanoi pv. phaseolicola (strain 1448A / Race 6) (Pseudomonas syringae pv. phaseolicola (strain 1448A / Race 6)) protein is Type III pantothenate kinase.